The following is a 166-amino-acid chain: 3-isopropylmalate dehydratase small subunit (166 aa).

It belongs to the LeuD family. LeuD type 2 subfamily. As to quaternary structure, heterodimer of LeuC and LeuD.

The enzyme catalyses (2R,3S)-3-isopropylmalate = (2S)-2-isopropylmalate. It participates in amino-acid biosynthesis; L-leucine biosynthesis; L-leucine from 3-methyl-2-oxobutanoate: step 2/4. Catalyzes the isomerization between 2-isopropylmalate and 3-isopropylmalate, via the formation of 2-isopropylmaleate. The chain is 3-isopropylmalate dehydratase small subunit from Moorella thermoacetica (strain ATCC 39073 / JCM 9320).